The primary structure comprises 318 residues: NADH-ubiquinone oxidoreductase chain 1 (318 aa).

8 consecutive transmembrane segments (helical) span residues 2–22 (FMIN…FLTL), 70–90 (MFII…SPLP), 100–120 (LGVL…LWSG), 136–156 (VAQT…VLLM), 172–192 (LWLL…TLAE), 222–242 (LFFL…AILF), 253–273 (ELYT…FLWI), and 294–314 (LPLT…TASI).

The protein belongs to the complex I subunit 1 family. In terms of assembly, core subunit of respiratory chain NADH dehydrogenase (Complex I) which is composed of 45 different subunits.

It is found in the mitochondrion inner membrane. The catalysed reaction is a ubiquinone + NADH + 5 H(+)(in) = a ubiquinol + NAD(+) + 4 H(+)(out). In terms of biological role, core subunit of the mitochondrial membrane respiratory chain NADH dehydrogenase (Complex I) which catalyzes electron transfer from NADH through the respiratory chain, using ubiquinone as an electron acceptor. Essential for the catalytic activity and assembly of complex I. This is NADH-ubiquinone oxidoreductase chain 1 (MT-ND1) from Balaenoptera physalus (Fin whale).